The following is a 113-amino-acid chain: Defense protein 2 (113 aa).

The protein belongs to the attacin/sarcotoxin-2 family.

It is found in the secreted. Functionally, has antibacterial activity against both Gram-positive and Gram-negative bacteria. The chain is Defense protein 2 from Lonomia obliqua (Moth).